A 459-amino-acid chain; its full sequence is N,N-dimethyl phenylurea N-demethylase subunit alpha (459 aa).

One can recognise a Rieske domain in the interval 55 to 166 (WVFVAHETEI…VESYHGFIFT (112 aa)). [2Fe-2S] cluster is bound by residues cysteine 97, histidine 99, cysteine 117, and histidine 120. Fe cation-binding residues include histidine 225, histidine 230, and aspartate 386.

This sequence belongs to the bacterial ring-hydroxylating dioxygenase alpha subunit family. PdmA (subunit alpha) and PdmB (subunit beta) form the oxygenase component of a bacterial Rieske non-heme iron oxygenase (RO) system. Requires [2Fe-2S] cluster as cofactor. Fe cation serves as cofactor.

It carries out the reaction a 1,1-dimethyl-3-phenylurea + 2 reduced [2Fe-2S]-[ferredoxin] + O2 + 2 H(+) = a 1-methyl-3-phenylurea + formaldehyde + 2 oxidized [2Fe-2S]-[ferredoxin] + H2O. The catalysed reaction is isoproturon + 2 reduced [2Fe-2S]-[ferredoxin] + O2 + 2 H(+) = 1-methyl-3-[4-(propan-2-yl)phenyl]urea + formaldehyde + 2 oxidized [2Fe-2S]-[ferredoxin] + H2O. The enzyme catalyses chlorotoluron + 2 reduced [2Fe-2S]-[ferredoxin] + O2 + 2 H(+) = 3-(3-chloro-4-methylphenyl)-1-methylurea + formaldehyde + 2 oxidized [2Fe-2S]-[ferredoxin] + H2O. It catalyses the reaction metoxuron + 2 reduced [2Fe-2S]-[ferredoxin] + O2 + 2 H(+) = 3-(3-chloro-4-methoxylphenyl)-1-methylurea + formaldehyde + 2 oxidized [2Fe-2S]-[ferredoxin] + H2O. It carries out the reaction monuron + 2 reduced [2Fe-2S]-[ferredoxin] + O2 + 2 H(+) = 3-(4-chlorophenyl)-1-methylurea + formaldehyde + 2 oxidized [2Fe-2S]-[ferredoxin] + H2O. The catalysed reaction is diuron + 2 reduced [2Fe-2S]-[ferredoxin] + O2 + 2 H(+) = 3-(3,4-dichlorophenyl)-1-methylurea + formaldehyde + 2 oxidized [2Fe-2S]-[ferredoxin] + H2O. The enzyme catalyses fluometuron + 2 reduced [2Fe-2S]-[ferredoxin] + O2 + 2 H(+) = 3-[3-(trifluoromethyl)phenyl]-1-methylurea + formaldehyde + 2 oxidized [2Fe-2S]-[ferredoxin] + H2O. It catalyses the reaction fenuron + 2 reduced [2Fe-2S]-[ferredoxin] + O2 + 2 H(+) = 1-methyl-3-phenylurea + formaldehyde + 2 oxidized [2Fe-2S]-[ferredoxin] + H2O. It functions in the pathway xenobiotic degradation. Activity is stimulated in vitro by coexpression of a [3Fe-4S]-type ferredoxin. Part of the multicomponent N,N-dimethyl phenylurea N-demethylase responsible for the initial N-demethylation step during the bacterial metabolism of N,N-dimethyl-substituted phenylurea herbicides. Catalyzes the mono-N-demethylation of N,N-dimethyl-substituted phenylurea herbicides to their mono-N-demethylated derivatives. Is active on isoproturon (IPU), chlorotoluron, metoxuron, monoron, diuron, fluometuron and fenuron, but cannot transform the N-methoxy-N-methyl-substituted herbicides. The chain is N,N-dimethyl phenylurea N-demethylase subunit alpha from Sphingobium sp. (strain YBL2).